Here is a 135-residue protein sequence, read N- to C-terminus: Transcriptional regulator HosA (135 aa).

The region spanning arginine 4–asparagine 134 is the HTH marR-type domain. Positions glutamine 48–asparagine 71 form a DNA-binding region, H-T-H motif.

Functionally, involved in the temperature-dependent positive control of flagellum-driven swimming motility and cellular aggregation. Regulates fliC expression by directly interacting with fliC promoter. The chain is Transcriptional regulator HosA (hosA) from Escherichia coli O111:H-.